The chain runs to 420 residues: Tyrosine--tRNA ligase (420 aa).

Tyr-38 serves as a coordination point for L-tyrosine. The 'HIGH' region motif lies at 43-52; that stretch reads PTGDSLHIGH. The L-tyrosine site is built by Tyr-169 and Gln-173. Positions 231 to 235 match the 'KMSKS' region motif; sequence KFGKS. Lys-234 is a binding site for ATP. The 67-residue stretch at 353–419 folds into the S4 RNA-binding domain; the sequence is KNIVEFLVET…GKRKYTLVKI (67 aa).

Belongs to the class-I aminoacyl-tRNA synthetase family. TyrS type 1 subfamily. As to quaternary structure, homodimer.

The protein localises to the cytoplasm. The catalysed reaction is tRNA(Tyr) + L-tyrosine + ATP = L-tyrosyl-tRNA(Tyr) + AMP + diphosphate + H(+). Its function is as follows. Catalyzes the attachment of tyrosine to tRNA(Tyr) in a two-step reaction: tyrosine is first activated by ATP to form Tyr-AMP and then transferred to the acceptor end of tRNA(Tyr). This chain is Tyrosine--tRNA ligase, found in Lactobacillus johnsonii (strain CNCM I-12250 / La1 / NCC 533).